The following is a 105-amino-acid chain: uncharacterized protein (105 aa).

The protein resides in the plastid. This is an uncharacterized protein from Euglena longa (Euglenophycean alga).